A 253-amino-acid chain; its full sequence is Spermatogenesis-associated protein 9 (253 aa).

Residues Leu144–Leu166 form a helical membrane-spanning segment. Residues Ala210–Lys228 show a composition bias toward basic and acidic residues. A disordered region spans residues Ala210–Ala231.

It localises to the membrane. In terms of biological role, may play at role in testicular development/spermatogenesis and may be an important factor in male infertility. This Bos taurus (Bovine) protein is Spermatogenesis-associated protein 9 (SPATA9).